Reading from the N-terminus, the 456-residue chain is TGACG-sequence-specific DNA-binding protein TGA-2.1 (456 aa).

Disordered regions lie at residues 1–41 and 115–170; these read MASK…NTSR and SASG…QKTL. 2 stretches are compositionally biased toward polar residues: residues 9-41 and 125-141; these read GNRS…NTSR and GESN…TSTD. A compositionally biased stretch (basic and acidic residues) spans 158 to 169; sequence DKSKEKVLDQKT. Positions 166–229 constitute a bZIP domain; it reads DQKTLRRLAQ…NIADQSNGVG (64 aa). Residues 167–220 adopt a coiled-coil conformation; that stretch reads QKTLRRLAQNREAARKSRLRKKAYVQQLENSRLKLSQLEQDLQRARQQGKYISN. Residues 168–188 are basic motif; the sequence is KTLRRLAQNREAARKSRLRKK. Positions 194–208 are leucine-zipper; sequence LENSRLKLSQLEQDL. In terms of domain architecture, DOG1 spans 233 to 450; that stretch reads PLAFDAEYSR…RALSSLWLAR (218 aa).

It belongs to the bZIP family. As to quaternary structure, can form heterodimer with TGA2.2.

Its subcellular location is the nucleus. Functionally, transcriptional activator that binds specifically to the DNA sequence 5'-TGACG-3'. Recognizes ocs elements like the as-1 motif of the cauliflower mosaic virus 35S promoter. Binding to the as-1-like cis elements mediate auxin- and salicylic acid-inducible transcription. The sequence is that of TGACG-sequence-specific DNA-binding protein TGA-2.1 (TGA21) from Nicotiana tabacum (Common tobacco).